The chain runs to 23 residues: Basic phospholipase A2 homolog (23 aa).

In terms of processing, contains 7 disulfide bonds. As to expression, expressed by the venom gland.

Its subcellular location is the secreted. This is Basic phospholipase A2 homolog from Trimeresurus stejnegeri (Chinese green tree viper).